The sequence spans 122 residues: Large ribosomal subunit protein uL14 (122 aa).

This sequence belongs to the universal ribosomal protein uL14 family. In terms of assembly, part of the 50S ribosomal subunit. Forms a cluster with proteins L3 and L19. In the 70S ribosome, L14 and L19 interact and together make contacts with the 16S rRNA in bridges B5 and B8.

In terms of biological role, binds to 23S rRNA. Forms part of two intersubunit bridges in the 70S ribosome. The polypeptide is Large ribosomal subunit protein uL14 (Francisella tularensis subsp. holarctica (strain LVS)).